Consider the following 232-residue polypeptide: MNAGRQLFVRSIRDFSTFVHTPDAERIKLVESGLMLDDQLREAYRIRGSFTDSRYHTWVCFEFIDKTGVSRYVRFRLINADRGPDRGLPRPEFKANGHPSMDAEADDDRAPDFLRKDFIHRVRHSDVRYILQAQLRDTPPPPVGNHELFDPSQPWNEYWFPWVDMFEIRLNEVIDDQAAVSRLEMNPNRSPECIRIPLATSPDDYASLGHARAIVYPGARAARAAVPPPQNN.

A compositionally biased stretch (basic and acidic residues) spans 86–95; the sequence is RGLPRPEFKA. The tract at residues 86-107 is disordered; sequence RGLPRPEFKANGHPSMDAEADD.

This is an uncharacterized protein from Sinorhizobium fredii (strain NBRC 101917 / NGR234).